A 196-amino-acid chain; its full sequence is ATP-dependent Clp protease proteolytic subunit (196 aa).

The Nucleophile role is filled by Ser96. Residue His121 is part of the active site.

It belongs to the peptidase S14 family. As to quaternary structure, fourteen ClpP subunits assemble into 2 heptameric rings which stack back to back to give a disk-like structure with a central cavity, resembling the structure of eukaryotic proteasomes.

It localises to the cytoplasm. The enzyme catalyses Hydrolysis of proteins to small peptides in the presence of ATP and magnesium. alpha-casein is the usual test substrate. In the absence of ATP, only oligopeptides shorter than five residues are hydrolyzed (such as succinyl-Leu-Tyr-|-NHMec, and Leu-Tyr-Leu-|-Tyr-Trp, in which cleavage of the -Tyr-|-Leu- and -Tyr-|-Trp bonds also occurs).. In terms of biological role, cleaves peptides in various proteins in a process that requires ATP hydrolysis. Has a chymotrypsin-like activity. Plays a major role in the degradation of misfolded proteins. The polypeptide is ATP-dependent Clp protease proteolytic subunit (Streptococcus pneumoniae (strain 70585)).